We begin with the raw amino-acid sequence, 362 residues long: MVRALIRRVLGRQENDQSTPQLELPPTDSRDRARSMVMGLQDEICAGLEALDGEGRFQEESWVRPEGGGGRSRVMREGRVFEQGGVNFSEVQGNELPPSILKQRPEAKGHPWFATGTSMVLHPRNPYIPTVHLNYRYFEAGPVWWFGGGADLTPYYPFLDDARHFHRTHQQACNSVHPNLHKVFKPWCDEYFYLKHRNETRGVGGIFYDYQDSRGTLYKGQDPTGAAAKVSSELGATPLSWEQLFSLGQANGRAFLPSYAPIVEKRHATSYGDRERDFQLYRRGRYVEFNLVWDRGTIFGLQTNGRTESILMSLPPLVRWEYGYTAEAGSREALLTDLFTTPQDWLGDPSLEERCRPHQAIN.

The interval 12-31 is disordered; the sequence is RQENDQSTPQLELPPTDSRD. Position 118 (Ser118) interacts with substrate. His122 and His132 together coordinate a divalent metal cation. The active-site Proton donor is His132. Residue 134-136 participates in substrate binding; it reads NYR. A divalent metal cation is bound by residues His166 and His196. The segment at 286–321 is important for dimerization; it reads YVEFNLVWDRGTIFGLQTNGRTESILMSLPPLVRWE.

This sequence belongs to the aerobic coproporphyrinogen-III oxidase family. Homodimer. A divalent metal cation serves as cofactor.

The protein localises to the cytoplasm. The enzyme catalyses coproporphyrinogen III + O2 + 2 H(+) = protoporphyrinogen IX + 2 CO2 + 2 H2O. The protein operates within porphyrin-containing compound metabolism; protoporphyrin-IX biosynthesis; protoporphyrinogen-IX from coproporphyrinogen-III (O2 route): step 1/1. In terms of biological role, involved in the heme and chlorophyll biosynthesis. Catalyzes the aerobic oxidative decarboxylation of propionate groups of rings A and B of coproporphyrinogen-III to yield the vinyl groups in protoporphyrinogen-IX. The protein is Oxygen-dependent coproporphyrinogen-III oxidase of Synechococcus sp. (strain CC9902).